We begin with the raw amino-acid sequence, 1403 residues long: Eukaryotic translation initiation factor 4 gamma (1403 aa).

Composition is skewed to polar residues over residues 1–11 (MSSKPPSNTPK), 19–39 (ASSQSNKSNSTKASENNTATA), and 50–60 (EPTNTSRANAQ). Disordered stretches follow at residues 1–381 (MSSK…GSTP), 439–464 (SRSGSQVSDQVVESPNSSTLSPRNGF), 488–774 (VVVP…KRDL), and 861–1003 (AFSD…EALL). Ser-83 is subject to Phosphoserine. The span at 109 to 137 (DNTSKPSANSSAERTSSQHQKPETSSQIG) shows a compositional bias: polar residues. Low complexity-rich tracts occupy residues 190-208 (SGVSSYSSKSQSVNSSVTS) and 231-248 (PRPTTSASNTNTSPANGA). The segment covering 249–269 (PTNKPSTDINTTDPATQTTQV) has biased composition (polar residues). A compositionally biased stretch (low complexity) spans 270–291 (SASNSPALSGSSTPSNTSSRSN). Over residues 298-308 (FSEKRHYDRYG) the composition is skewed to basic and acidic residues. Positions 325 to 334 (NYNNSGNNRN) are enriched in low complexity. Composition is skewed to polar residues over residues 346-381 (RNYNNQGAYPTYMSNGRSANQSPRNNPQNVNNGSTP), 439-460 (SRSGSQVSDQVVESPNSSTLSP), and 493-508 (KNASSPNPSETNSRAE). Phosphoserine is present on residues Ser-452, Ser-455, Ser-456, and Ser-459. A compositionally biased stretch (basic and acidic residues) spans 537 to 714 (IQEKAEAEAK…GKREADKNPE (178 aa)). Positions 720–737 (PLASSEANVDTSKQTNAT) are enriched in polar residues. A compositionally biased stretch (basic and acidic residues) spans 741–754 (VVDKTKVEKLKASE). Over residues 757–768 (STSSLSSPSHST) the composition is skewed to low complexity. A phosphoserine mark is found at Ser-866 and Ser-882. Residues 868–886 (RGMYSSSRQSSRSGSNTHS) show a composition bias toward low complexity. Position 884 is a phosphothreonine (Thr-884). A phosphoserine mark is found at Ser-886, Ser-911, Ser-919, and Ser-921. Residue Tyr-923 is modified to Phosphotyrosine. Residues 986–995 (KLTEKPAETK) show a composition bias toward basic and acidic residues. The 237-residue stretch at 1009-1245 (QRKVKGSLNK…MDVMDSRKNG (237 aa)) folds into the MIF4G domain. Positions 1266–1403 (AERKKALAES…QKDSNSKTSS (138 aa)) are disordered. Basic and acidic residues predominate over residues 1284 to 1295 (HGRDMNRGDSRM). 3 stretches are compositionally biased toward polar residues: residues 1302–1313 (PPFSSSDWSNNK), 1328–1341 (SGTQGSHGPTSLSS), and 1348–1358 (VSRTPSRQNSA). A Phosphoserine modification is found at Ser-1333. Positions 1383 to 1403 (LEEHDHDNDGGQKDSNSKTSS) are enriched in basic and acidic residues.

Belongs to the eukaryotic initiation factor 4G family.

Its subcellular location is the cytoplasm. It localises to the perinuclear region. In terms of biological role, component of the protein complex eIF4F, which is involved in the recognition of the mRNA cap, ATP-dependent unwinding of 5'-terminal secondary structure and recruitment of mRNA to the ribosome. This is Eukaryotic translation initiation factor 4 gamma (tif471) from Schizosaccharomyces pombe (strain 972 / ATCC 24843) (Fission yeast).